A 470-amino-acid chain; its full sequence is Methylenetetrahydrofolate--tRNA-(uracil-5-)-methyltransferase TrmFO (470 aa).

10-15 contributes to the FAD binding site; sequence GAGLAG.

It belongs to the MnmG family. TrmFO subfamily. FAD serves as cofactor.

The protein localises to the cytoplasm. It carries out the reaction uridine(54) in tRNA + (6R)-5,10-methylene-5,6,7,8-tetrahydrofolate + NADH + H(+) = 5-methyluridine(54) in tRNA + (6S)-5,6,7,8-tetrahydrofolate + NAD(+). It catalyses the reaction uridine(54) in tRNA + (6R)-5,10-methylene-5,6,7,8-tetrahydrofolate + NADPH + H(+) = 5-methyluridine(54) in tRNA + (6S)-5,6,7,8-tetrahydrofolate + NADP(+). Its function is as follows. Catalyzes the folate-dependent formation of 5-methyl-uridine at position 54 (M-5-U54) in all tRNAs. In Prochlorococcus marinus (strain MIT 9312), this protein is Methylenetetrahydrofolate--tRNA-(uracil-5-)-methyltransferase TrmFO.